Reading from the N-terminus, the 236-residue chain is N-acetyl-alpha-D-glucosaminyl L-malate deacetylase 1 (236 aa).

Residues H12, D15, and H113 each contribute to the Zn(2+) site.

It belongs to the PIGL family. It depends on Zn(2+) as a cofactor.

The catalysed reaction is (S)-malyl N-acetyl-alpha-D-glucosaminide + H2O = (S)-malyl alpha-D-glucosaminide + acetate. Involved in bacillithiol (BSH) biosynthesis. Catalyzes the second step of the pathway, the deacetylation of N-acetylglucosaminylmalate (GlcNAc-Mal) to glucosamine malate (GlcN-Mal). This chain is N-acetyl-alpha-D-glucosaminyl L-malate deacetylase 1, found in Bacillus subtilis (strain 168).